Consider the following 648-residue polypeptide: Replication restart protein PriA (648 aa).

The Helicase ATP-binding domain maps to 131 to 297 (TILNESNKPT…EIGKYQLVTL (167 aa)). Residue 144-151 (GVTGSGKT) coordinates ATP. The short motif at 240–243 (DEEH) is the DEAH box element. Zn(2+)-binding residues include cysteine 358, cysteine 361, cysteine 367, cysteine 370, cysteine 385, cysteine 388, cysteine 398, and cysteine 401. The Helicase C-terminal domain maps to 393–548 (KIFSSCPECL…SFFANELEIR (156 aa)).

Belongs to the helicase family. PriA subfamily. Component of the replication restart primosome. Requires Zn(2+) as cofactor.

The enzyme catalyses Couples ATP hydrolysis with the unwinding of duplex DNA by translocating in the 3'-5' direction.. It carries out the reaction ATP + H2O = ADP + phosphate + H(+). Its function is as follows. Initiates the restart of stalled replication forks, which reloads the replicative helicase on sites other than the origin of replication. Recognizes and binds to abandoned replication forks and remodels them to uncover a helicase loading site. Promotes assembly of the primosome at these replication forks. The sequence is that of Replication restart protein PriA from Rickettsia conorii (strain ATCC VR-613 / Malish 7).